The sequence spans 166 residues: Regulatory protein RecX (166 aa).

This sequence belongs to the RecX family.

Its subcellular location is the cytoplasm. Modulates RecA activity. The polypeptide is Regulatory protein RecX (Salmonella newport (strain SL254)).